The following is a 346-amino-acid chain: D-erythrose-4-phosphate dehydrogenase (346 aa).

Residue 11–12 (RI) coordinates NAD(+). Substrate-binding positions include 163-165 (SCT), Arg209, 222-223 (TK), and Arg245. The active-site Nucleophile is the Cys164. Asn327 is a binding site for NAD(+).

Belongs to the glyceraldehyde-3-phosphate dehydrogenase family. Epd subfamily. As to quaternary structure, homotetramer.

Its subcellular location is the cytoplasm. The enzyme catalyses D-erythrose 4-phosphate + NAD(+) + H2O = 4-phospho-D-erythronate + NADH + 2 H(+). The protein operates within cofactor biosynthesis; pyridoxine 5'-phosphate biosynthesis; pyridoxine 5'-phosphate from D-erythrose 4-phosphate: step 1/5. Catalyzes the NAD-dependent conversion of D-erythrose 4-phosphate to 4-phosphoerythronate. The chain is D-erythrose-4-phosphate dehydrogenase from Vibrio vulnificus (strain YJ016).